Reading from the N-terminus, the 235-residue chain is Secretory carrier-associated membrane protein 5B (235 aa).

The Cytoplasmic segment spans residues 1-39 (MSDKPNNFPPLPRFIPLKPCFYQDFDTDIPDVHRTTAKR). The chain crosses the membrane as a helical span at residues 40–60 (LYYLWMLNSITLGVNLIGCLA). At 61–67 (WLIGGGG) the chain is on the extracellular side. Residues 68–88 (ATNFGLAFLWLILFTPCSYVC) form a helical membrane-spanning segment. Over 89–102 (WFRPIYKAFKTDSS) the chain is Cytoplasmic. The chain crosses the membrane as a helical span at residues 103–125 (FNFMAFFFTFTGQLVISIIQAVG). At 126–148 (IPGWGVCGWIASISFFGTNVGSA) the chain is on the extracellular side. Residues 149-169 (VVMLIPTIMFTAVAVLSFVAL) form a helical membrane-spanning segment. Residues 170–235 (TKVHRFYRGA…TPNYGYSNQM (66 aa)) are Cytoplasmic-facing.

The protein belongs to the SCAMP family. SCAMP5 subfamily.

The protein localises to the cell membrane. It is found in the golgi apparatus membrane. The protein resides in the golgi apparatus. It localises to the trans-Golgi network membrane. Its subcellular location is the recycling endosome membrane. The protein localises to the cytoplasmic vesicle. It is found in the secretory vesicle. The protein resides in the synaptic vesicle membrane. Required for the calcium-dependent exocytosis of signal sequence-containing cytokines. Probably acts in cooperation with the SNARE machinery. This chain is Secretory carrier-associated membrane protein 5B (scamp5-b), found in Xenopus laevis (African clawed frog).